Reading from the N-terminus, the 520-residue chain is MTDDEMYEDYDVDDDSAEESGNESLDDTEYDDAATQEFDFDENQPQRSLGKLTRQKSFEVLNKDDLFSESHKIIKEVKDVLSIPSEAAVSTLLRHMKWNKEKLIERYMENPEKLCIDAGVPNVMKLNATIVEKSGNVSCLICLEDYPPTQTFALICNHRYCLPCYKNYLEIKVSEGPECIYTPCPAPKCKVIVHQDAFKQIVSPEVFERFNNFILKSYVDDNPQVKWCPAPGCIYSIRCDRKERKEAVNCKCGFQYCFNCNDYEIGDHMPCPCSQVDKWLQKASDESENVTWMLANTKKCPECRSPIEKNGGCMHMTCRKNAGGCGFEFCWLCRGPWTEHGSTTGGYYNCNKYDKSKAKEDDDKAHDAKTELEAYMFYYHRYESHRNAMKIADEQRRNAHLKEQQILSKFDVRSADTKFLMEATEQLLKNRRVLQYSYVYGYYLDKKSQERNLFEYLQEDLEKHTNLLSTQYEQSLDKLEDYQAFIKWKEQVTNYTRITKKFLDNFVDGVAGGLVNTQIN.

Residues 1 to 42 show a composition bias toward acidic residues; that stretch reads MTDDEMYEDYDVDDDSAEESGNESLDDTEYDDAATQEFDFDE. The tract at residues 1–51 is disordered; that stretch reads MTDDEMYEDYDVDDDSAEESGNESLDDTEYDDAATQEFDFDENQPQRSLGK. The tract at residues 135–354 is TRIAD supradomain; the sequence is GNVSCLICLE…GGYYNCNKYD (220 aa). Positions 139, 142, 156, 158, 161, 164, 184, 189, 228, 233, 250, 252, 257, 260, 268, 273, 300, and 303 each coordinate Zn(2+). An RING-type 1 zinc finger spans residues 139 to 189; sequence CLICLEDYPPTQTFALICNHRYCLPCYKNYLEIKVSEGPECIYTPCPAPKC. The IBR-type zinc finger occupies 208 to 273; it reads ERFNNFILKS…EIGDHMPCPC (66 aa). An RING-type 2; atypical zinc finger spans residues 300-333; it reads CPECRSPIEKNGGCMHMTCRKNAGGCGFEFCWLC. Residue C313 is part of the active site. Positions 318, 325, 330, 333, 340, and 350 each coordinate Zn(2+).

The protein belongs to the RBR family.

The catalysed reaction is [E2 ubiquitin-conjugating enzyme]-S-ubiquitinyl-L-cysteine + [acceptor protein]-L-lysine = [E2 ubiquitin-conjugating enzyme]-L-cysteine + [acceptor protein]-N(6)-ubiquitinyl-L-lysine.. The protein operates within protein modification; protein ubiquitination. Its function is as follows. Might act as an E3 ubiquitin-protein ligase. Appears to be required for normal cell-type proportioning and cell sorting during multicellular development. In addition to being necessary for a normal percentage of prestalk cells and the organization of the slug, rbrA is also necessary for spore cell viability. The protein is Probable E3 ubiquitin-protein ligase rbrA (rbrA) of Dictyostelium discoideum (Social amoeba).